A 130-amino-acid chain; its full sequence is Small ribosomal subunit protein uS9 (130 aa).

This sequence belongs to the universal ribosomal protein uS9 family.

The chain is Small ribosomal subunit protein uS9 from Ralstonia nicotianae (strain ATCC BAA-1114 / GMI1000) (Ralstonia solanacearum).